The following is a 451-amino-acid chain: Trigger factor (451 aa).

A PPIase FKBP-type domain is found at 170 to 256 (DHIATIDYCE…LTALKYKDLP (87 aa)).

Belongs to the FKBP-type PPIase family. Tig subfamily.

The protein localises to the cytoplasm. The catalysed reaction is [protein]-peptidylproline (omega=180) = [protein]-peptidylproline (omega=0). Involved in protein export. Acts as a chaperone by maintaining the newly synthesized protein in an open conformation. Functions as a peptidyl-prolyl cis-trans isomerase. This Treponema denticola (strain ATCC 35405 / DSM 14222 / CIP 103919 / JCM 8153 / KCTC 15104) protein is Trigger factor.